Consider the following 551-residue polypeptide: Adenylyl cyclase-associated protein (551 aa).

The tract at residues 34-55 is disordered; the sequence is SGHKPLPNMHRPSRDSNSQTHN. At S92 the chain carries Phosphoserine. Phosphothreonine is present on T96. The span at 288–300 shows a compositional bias: polar residues; the sequence is SASKTQAPSSGDS. Disordered regions lie at residues 288–333 and 348–395; these read SASK…NKGD and TSGL…PVKP. Positions 305–315 are enriched in pro residues; the sequence is LPPPPPPPPPS. Residues 352–361 are compositionally biased toward basic and acidic residues; the sequence is RKVDKSEMTH. The 135-residue stretch at 395–529 folds into the C-CAP/cofactor C-like domain; sequence PPRIELENTK…EEGDYAERAV (135 aa).

This sequence belongs to the CAP family.

Functionally, the N-terminal domain binds to adenylyl cyclase, thereby enabling adenylyl cyclase to be activated by upstream regulatory signals, such as Ras. The C-terminal domain is required for normal cellular morphology and growth control. The protein is Adenylyl cyclase-associated protein (cap1) of Schizosaccharomyces pombe (strain 972 / ATCC 24843) (Fission yeast).